The primary structure comprises 246 residues: Chlorophyll a-b binding protein 6A, chloroplastic (246 aa).

A chloroplast-targeting transit peptide spans 1 to 45 (MASNTLMSCGIPAVCPSFLSSTKSKFAAAMPVYVGATNFMSRFSM). Tryptophan 49 is a chlorophyll b binding site. 3 residues coordinate chlorophyll a: phenylalanine 69, glutamate 88, and histidine 91. Chlorophyll b is bound at residue arginine 93. A helical transmembrane segment spans residues 94 to 114 (WAMLAVPGIIVPEALGLGNWV). Leucine 130 contributes to the chlorophyll a binding site. The helical transmembrane segment at 133-153 (PVPWGTLPTILAIEFLAIAFV) threads the bilayer. Valine 134, glutamate 154, and arginine 157 together coordinate chlorophyll b. Residues lysine 191, glutamate 192, asparagine 195, arginine 197, glutamine 209, and histidine 225 each contribute to the chlorophyll a site.

Belongs to the light-harvesting chlorophyll a/b-binding (LHC) protein family. The LHC complex consists of chlorophyll a-b binding proteins. The cofactor is Binds at least 14 chlorophylls (8 Chl-a and 6 Chl-b) and carotenoids such as lutein and neoxanthin.. In terms of processing, photoregulated by reversible phosphorylation of its threonine residues.

Its subcellular location is the plastid. The protein localises to the chloroplast thylakoid membrane. The light-harvesting complex (LHC) functions as a light receptor, it captures and delivers excitation energy to photosystems with which it is closely associated. The sequence is that of Chlorophyll a-b binding protein 6A, chloroplastic (CAB6A) from Solanum lycopersicum (Tomato).